Consider the following 454-residue polypeptide: F-box/WD-40 repeat-containing protein At3g52030 (454 aa).

Residues 20 to 66 (PTSIESLDADILCIIFSFLDLFDLVHCTVVCNSWNAVIKRLKLLQAS) form the F-box domain. WD repeat units lie at residues 85-116 (DRPA…RWEA), 117-153 (HSHR…CMEE), 170-214 (SKKL…SIFP), 215-255 (SRAG…CSQI), 258-296 (TQGG…PVAT), 301-340 (ITAG…RLWE), 343-383 (VSPN…VLSR), and 422-454 (KVRP…FNLS).

The sequence is that of F-box/WD-40 repeat-containing protein At3g52030 from Arabidopsis thaliana (Mouse-ear cress).